Here is a 361-residue protein sequence, read N- to C-terminus: MNSSILAKLEQLSIRLEEVSIMLSDPEVVSNVKKFTKLSIEYAQLTPVNQQFQTYLSHLKNLEDAQLILFEDDMEIKTMAKEEILNTKKILSQLDLKLKKSILPKDPNDSRNIIIEIRAGTGGDEASIFSGDLFKIYSRYSEKQKWTIEIISSSIGEHGGFKEIIARISGINVYSKLKFESGAHRVQRVPTTESQGRIHTSACTVAIMPEVENIEEINININDVRIDTFRASGAGGQHVNKTDSAVRITHLPTGTVVECQDGRSQHKNKAQAMSVLASRILDAQQQEQQEQQSSTRKELIGSGDRSQRIRTYNYPQGRITDHRINLTLYKLTEIMEGNLSAIIKPLIIEQQTNQLTELNNT.

The residue at position 237 (Q237) is an N5-methylglutamine. The tract at residues 283 to 307 is disordered; that stretch reads AQQQEQQEQQSSTRKELIGSGDRSQ.

The protein belongs to the prokaryotic/mitochondrial release factor family. Post-translationally, methylated by PrmC. Methylation increases the termination efficiency of RF1.

It is found in the cytoplasm. In terms of biological role, peptide chain release factor 1 directs the termination of translation in response to the peptide chain termination codons UAG and UAA. In Vesicomyosocius okutanii subsp. Calyptogena okutanii (strain HA), this protein is Peptide chain release factor 1.